Consider the following 217-residue polypeptide: Protein MODIFYING WALL LIGNIN-2 (217 aa).

The first 23 residues, 1–23, serve as a signal peptide directing secretion; the sequence is MHNLFLYSVVFSLGLVSFITCFA. Residues 24–51 lie on the Cytoplasmic side of the membrane; the sequence is AEFKRTQKEDIRWDTERNCYVPGSHAFG. A helical membrane pass occupies residues 52-72; sequence LGSAAVLCFCLAQIVGNIVVF. Over 73-94 the chain is Extracellular; sequence RNHRTRTKREDGYKITDLTLPT. A helical membrane pass occupies residues 95 to 115; the sequence is VLLLLSWSNFVVVVLILSTAI. Residues 116-137 lie on the Cytoplasmic side of the membrane; that stretch reads SMSRAQAYGEGWLDEDCYLVKD. Residues 138-158 traverse the membrane as a helical segment; that stretch reads GVFAASGCLAILGLGALTISA. Over 159–217 the chain is Extracellular; it reads TRIKVKKQQQLVQVVIKDQNQDQRRSMEEEQKHDEHQTNKSESVIHLVEEVSSTNISRI. Residues N197 and N213 are each glycosylated (N-linked (GlcNAc...) asparagine).

The protein belongs to the DESIGUAL family.

The protein localises to the cell membrane. In terms of biological role, together with MWL1, contributes to secondary cell wall biology, specifically lignin biosynthesis. The chain is Protein MODIFYING WALL LIGNIN-2 from Arabidopsis thaliana (Mouse-ear cress).